Here is a 430-residue protein sequence, read N- to C-terminus: MSMITEIYAREILDSRGNPSVEVEVFTEDGGFGRALVPSGASTGEHEAVELRDGDKSRYLGKGVLKAVANVNDTIAPELIGYDVFDQNAIDAKMIELDGTPNKAKLGANAILGVSMAAAHAAADELGLPLYTYLGGFNAKTLPTPMMNIINGGSHADNNVDFQEFMIMPVGAPTFREALRMGAEVFHALKSVLSGMGLNTAVGDEGGFAPNLKSNEEAITVILEAIEKAGYKPGEDVYLAMDVASSEFYDKSTGKYELAGEGKSLTTAELVDFYAELVDKYPILSIEDGCDENDWDGHKLLTDKIGHKVQLVGDDLFVTNTSKLAEGIEKGIANSILIKVNQIGTLTETFDAIEMAKKAGYTAVVSHRSGETEDATIADIAVATNAGQIKTGSLSRTDRIAKYNQLLRIEDMLGDVAKYDGIKSFYNLKK.

Gln-163 contributes to the (2R)-2-phosphoglycerate binding site. Glu-205 acts as the Proton donor in catalysis. Mg(2+) contacts are provided by Asp-242, Glu-287, and Asp-314. Residues Lys-339, Arg-368, Ser-369, and Lys-390 each contribute to the (2R)-2-phosphoglycerate site. Catalysis depends on Lys-339, which acts as the Proton acceptor.

It belongs to the enolase family. It depends on Mg(2+) as a cofactor.

It is found in the cytoplasm. Its subcellular location is the secreted. The protein localises to the cell surface. It catalyses the reaction (2R)-2-phosphoglycerate = phosphoenolpyruvate + H2O. Its pathway is carbohydrate degradation; glycolysis; pyruvate from D-glyceraldehyde 3-phosphate: step 4/5. Its function is as follows. Catalyzes the reversible conversion of 2-phosphoglycerate (2-PG) into phosphoenolpyruvate (PEP). It is essential for the degradation of carbohydrates via glycolysis. The chain is Enolase from Exiguobacterium sp. (strain ATCC BAA-1283 / AT1b).